A 51-amino-acid chain; its full sequence is Large ribosomal subunit protein eL39 (51 aa).

The protein belongs to the eukaryotic ribosomal protein eL39 family.

In Methanosarcina acetivorans (strain ATCC 35395 / DSM 2834 / JCM 12185 / C2A), this protein is Large ribosomal subunit protein eL39.